We begin with the raw amino-acid sequence, 444 residues long: tRNA-2-methylthio-N(6)-dimethylallyladenosine synthase (444 aa).

Positions 10 to 126 (SSFYIHTFGC…LAGLVAGLRE (117 aa)) constitute an MTTase N-terminal domain. Residues cysteine 19, cysteine 55, cysteine 89, cysteine 163, cysteine 167, and cysteine 170 each contribute to the [4Fe-4S] cluster site. Residues 149 to 379 (RAGSISAFLP…IELQNAISRE (231 aa)) enclose the Radical SAM core domain. The TRAM domain maps to 382-444 (QREIGKTVEV…TSATLSGEAV (63 aa)).

This sequence belongs to the methylthiotransferase family. MiaB subfamily. Monomer. Requires [4Fe-4S] cluster as cofactor.

Its subcellular location is the cytoplasm. The catalysed reaction is N(6)-dimethylallyladenosine(37) in tRNA + (sulfur carrier)-SH + AH2 + 2 S-adenosyl-L-methionine = 2-methylsulfanyl-N(6)-dimethylallyladenosine(37) in tRNA + (sulfur carrier)-H + 5'-deoxyadenosine + L-methionine + A + S-adenosyl-L-homocysteine + 2 H(+). Its function is as follows. Catalyzes the methylthiolation of N6-(dimethylallyl)adenosine (i(6)A), leading to the formation of 2-methylthio-N6-(dimethylallyl)adenosine (ms(2)i(6)A) at position 37 in tRNAs that read codons beginning with uridine. The sequence is that of tRNA-2-methylthio-N(6)-dimethylallyladenosine synthase from Chlorobaculum tepidum (strain ATCC 49652 / DSM 12025 / NBRC 103806 / TLS) (Chlorobium tepidum).